The sequence spans 476 residues: MASPANQTGRITQVIGAVVDVQFEGHLPAILNAIETKNGDNRLVLEVAQHLGESTVRTIAMDTTEGLVRGQEVKDTGNPILVPVGVGTLGRIMNVIGEPVDEQGPVKAEDMRAIHQEAPLYTDQSTEAEILVTGIKVVDLLAPYAKGGKIGLFGGAGVGKTVLIQELINNVAKAHGGYSVFAGVGERTREGNDLYHEFIESGVNKKGGGEGSKCALVYGQMNEPPGARARVALSGLTVAEHFRDQGQDVLFFVDNIFRFTQAGSEVSALLGRIPSAVGYQPTLATDMGALQERITTTTKGSITSIQAIYVPADDLTDPAPATSFAHLDATTTLNRAISEKGIYPAVDPLDSTSRMLSPLIVGEEHYQTARMVQQVLQRYKSLQDIIAILGMDELSEEDKIAVARARKIERFLSQPFFVAEIFTGAPGKFVDLADTIKGFRAICDGKYDHLPEAAFYMVGTIEEAVEKGKKLAAEAA.

154–161 (GGAGVGKT) provides a ligand contact to ATP.

It belongs to the ATPase alpha/beta chains family. F-type ATPases have 2 components, CF(1) - the catalytic core - and CF(0) - the membrane proton channel. CF(1) has five subunits: alpha(3), beta(3), gamma(1), delta(1), epsilon(1). CF(0) has three main subunits: a(1), b(2) and c(9-12). The alpha and beta chains form an alternating ring which encloses part of the gamma chain. CF(1) is attached to CF(0) by a central stalk formed by the gamma and epsilon chains, while a peripheral stalk is formed by the delta and b chains.

It is found in the cell inner membrane. It catalyses the reaction ATP + H2O + 4 H(+)(in) = ADP + phosphate + 5 H(+)(out). Its function is as follows. Produces ATP from ADP in the presence of a proton gradient across the membrane. The catalytic sites are hosted primarily by the beta subunits. In Nitrobacter hamburgensis (strain DSM 10229 / NCIMB 13809 / X14), this protein is ATP synthase subunit beta.